The following is a 270-amino-acid chain: MLNLCDEDFDAMELVEGALALNKAINPETQLEWAHIELARLLKEAELALVHERDEKARFEAFLRLFYQEWGFSGDREAYFDSRNAFIDQVLQRRKGIPVSLGSLLLYLGHKLGFPLNGISFPTQFLLSLNWSGERPIYLNPFNGEIVSQHTLQAWLVGHKGPLAKLKPQHLQSVDNPTIIGRWLALLKSALLREERYTLALRCTDLALTFVPDDPYEIRDRGFIYQQLQCHQIAISDYQYFIEHCPNDPAAELLKTQVNALSHDSQVTLH.

It belongs to the UPF0162 family.

The sequence is that of UPF0162 protein VC_2176 from Vibrio cholerae serotype O1 (strain ATCC 39315 / El Tor Inaba N16961).